We begin with the raw amino-acid sequence, 659 residues long: Exoribonuclease 2 (659 aa).

An RNB domain is found at 189-531; it reads RENLTALHFV…NHRLIKAVLA (343 aa). The 83-residue stretch at 576 to 658 folds into the S1 motif domain; the sequence is NAEFEAEVQD…ATRSIVGEIL (83 aa).

Belongs to the RNR ribonuclease family. RNase II subfamily.

Its subcellular location is the cytoplasm. The catalysed reaction is Exonucleolytic cleavage in the 3'- to 5'-direction to yield nucleoside 5'-phosphates.. Its function is as follows. Involved in mRNA degradation. Hydrolyzes single-stranded polyribonucleotides processively in the 3' to 5' direction. The polypeptide is Exoribonuclease 2 (Haemophilus influenzae (strain PittGG)).